A 422-amino-acid polypeptide reads, in one-letter code: Protein IQ-DOMAIN 5 (422 aa).

Residues 23–30 carry the Nuclear localization signal motif; it reads SKKDENVK. IQ domains lie at 87–115, 116–138, and 139–164; these read ENRA…GLVR, LQAL…CMQA, and LVRV…TSQQ. Residues 137-151 form a calmodulin-binding region; sequence QALVRVQARVRARRV. The disordered stretch occupies residues 269–422; that stretch reads GENGMEQSEN…NSDPIKQRLA (154 aa). A compositionally biased stretch (polar residues) spans 273–308; sequence MEQSENVPKTQIKSVSKMPNTSNLVSGVSSQMTGPC. Residues 310–327 are compositionally biased toward low complexity; it reads SDGDSSSPGISSSIPVVS. The segment covering 355–371 has biased composition (basic and acidic residues); that stretch reads NPKERSREPNRSSKERL. Over residues 373-387 the composition is skewed to polar residues; it reads LPNSGKSLGSQSTKA. Basic and acidic residues predominate over residues 412–422; it reads RNSDPIKQRLA.

It belongs to the IQD family. As to quaternary structure, binds to multiple calmodulin (CaM) in the presence of Ca(2+) and CaM-like proteins. In terms of tissue distribution, expressed mostly in vegetative tissues including older parts of the root, cotyledons, leaves and shoot apical meristems (SAM). Present at low levels in pollen, siliques and seeds.

Its subcellular location is the nucleus. The protein resides in the cytoplasm. It is found in the cytoskeleton. It localises to the spindle. The protein localises to the phragmoplast. Functionally, may be involved in cooperative interactions with calmodulins or calmodulin-like proteins. Recruits calmodulin (CaM) calcium sensor proteins to cortical microtubule arrays, thus being a potential scaffold in cellular signaling and trafficking. Binds to microtubules (MTs) and promotes MT assembly and dynamics to modulate pavement cell (PC) morphogenesis via cellulose deposition-dependent anisotropic cell expansion triggered by cellulose synthase complexes (CSCs). May associate with nucleic acids and regulate gene expression at the transcriptional or post-transcriptional level. The protein is Protein IQ-DOMAIN 5 of Arabidopsis thaliana (Mouse-ear cress).